Consider the following 104-residue polypeptide: PTS system lactose-specific EIIA component (104 aa).

One can recognise a PTS EIIA type-3 domain in the interval 4–102 (EEATLLGFEI…MKHLIELYKR (99 aa)). Residue H78 is the Tele-phosphohistidine intermediate of the active site. A Phosphohistidine; by HPr modification is found at H78. A Mg(2+)-binding site is contributed by D81.

In terms of assembly, homotrimer. Requires Mg(2+) as cofactor.

Its subcellular location is the cytoplasm. The phosphoenolpyruvate-dependent sugar phosphotransferase system (sugar PTS), a major carbohydrate active transport system, catalyzes the phosphorylation of incoming sugar substrates concomitantly with their translocation across the cell membrane. The enzyme II LacEF PTS system is involved in lactose transport. The chain is PTS system lactose-specific EIIA component from Streptococcus mutans serotype c (strain ATCC 700610 / UA159).